The chain runs to 361 residues: tRNA-specific 2-thiouridylase MnmA (361 aa).

ATP is bound by residues 10–17 and methionine 36; that span reads GMSGGVDS. The active-site Nucleophile is the cysteine 104. Cysteines 104 and 202 form a disulfide. Residue glycine 128 coordinates ATP. The interval 152–154 is interaction with tRNA; that stretch reads KDQ. Residue cysteine 202 is the Cysteine persulfide intermediate of the active site. Residues 308-309 are interaction with tRNA; it reads RY.

This sequence belongs to the MnmA/TRMU family.

It is found in the cytoplasm. The enzyme catalyses S-sulfanyl-L-cysteinyl-[protein] + uridine(34) in tRNA + AH2 + ATP = 2-thiouridine(34) in tRNA + L-cysteinyl-[protein] + A + AMP + diphosphate + H(+). Catalyzes the 2-thiolation of uridine at the wobble position (U34) of tRNA, leading to the formation of s(2)U34. This is tRNA-specific 2-thiouridylase MnmA from Clostridioides difficile (strain 630) (Peptoclostridium difficile).